The chain runs to 324 residues: Proto-oncogene Mas (324 aa).

Topologically, residues 1 to 35 (MDQSNMTSFAEEKAMNTSSRNASLGTSHPPIPIVH) are extracellular. 3 N-linked (GlcNAc...) asparagine glycosylation sites follow: asparagine 5, asparagine 16, and asparagine 21. A helical membrane pass occupies residues 36–60 (WVIMSISPLGFVENGILLWFLCFRM). The Cytoplasmic segment spans residues 61–64 (RRNP). The chain crosses the membrane as a helical span at residues 65 to 86 (FTVYITHLSIADISLLFCIFIL). Residues 87 to 103 (SIDYALDYELSSGHYYT) are Extracellular-facing. A helical transmembrane segment spans residues 104 to 127 (IVTLSVTFLFGYNTGLYLLTAISV). Residues 128-148 (ERCLSVLYPIWYRCHRPKHQS) are Cytoplasmic-facing. The helical transmembrane segment at 149-171 (AFVCALLWALSCLVTTMEYVMCI) threads the bilayer. The Extracellular portion of the chain corresponds to 172-184 (DSGEESHSQSDCR). Residues 185 to 205 (AVIIFIAILSFLVFTPLMLVS) traverse the membrane as a helical segment. At 206–223 (STILVVKIRKNTWASHSS) the chain is on the cytoplasmic side. The helical transmembrane segment at 224–244 (KLYIVIMVTIIIFLIFAMPMR) threads the bilayer. Residues 245–262 (VLYLLYYEYWSTFGNLHN) are Extracellular-facing. A helical membrane pass occupies residues 263-283 (ISLLFSTINSSANPFIYFFVG). Residues 284 to 324 (SSKKKRFRESLKVVLTRAFKDEMQPRRQEGNGNTVSIETVV) are Cytoplasmic-facing.

It belongs to the G-protein coupled receptor 1 family. As to quaternary structure, interacts with AGTR1. Interacts with FLNA (via filamin repeat 21); increases PKA-mediated phosphorylation of FLNA. In terms of tissue distribution, expressed in platelets.

The protein localises to the cell membrane. Functionally, receptor for angiotensin 1-7. Acts specifically as a functional antagonist of AGTR1 (angiotensin-2 type 1 receptor), although it up-regulates AGTR1 receptor levels. Positive regulation of AGTR1 levels occurs through activation of the G-proteins GNA11 and GNAQ, and stimulation of the protein kinase C signaling cascade. The antagonist effect on AGTR1 function is probably due to AGTR1 being physically altered by MAS1. The protein is Proto-oncogene Mas (Mas1) of Rattus norvegicus (Rat).